Reading from the N-terminus, the 808-residue chain is Glutamate receptor 1.1 (808 aa).

The first 19 residues, 1-19, serve as a signal peptide directing secretion; the sequence is MEILFSISILALLFSGVVA. Over 20–541 the chain is Extracellular; that stretch reads APSDDDVFEE…MWTFFDPFEK (522 aa). N-linked (GlcNAc...) asparagine glycans are attached at residues asparagine 288, asparagine 339, and asparagine 504. The helical transmembrane segment at 542–562 threads the bilayer; that stretch reads SLWLASGAFFVLTGIVVWLVE. Over 563–570 the chain is Cytoplasmic; sequence RSVNPEFQ. The helical transmembrane segment at 571-591 threads the bilayer; sequence GSWGQQLSMMLWFGFSTIVFA. At 592-602 the chain is on the cytoplasmic side; it reads HREKLQKMSSR. The helical transmembrane segment at 603–623 threads the bilayer; that stretch reads FLVIVWVFVVLILTSSYSANL. Residues 624 to 771 are Extracellular-facing; sequence TSTKTISRMQ…SKRFTFRELR (148 aa). Residues 772 to 792 form a helical membrane-spanning segment; that stretch reads GLFIIAGAAHVLVLALHLFHT. Topologically, residues 793–808 are cytoplasmic; that stretch reads RQEVSRLCTKLQSFYK.

It belongs to the glutamate-gated ion channel (TC 1.A.10.1) family. As to quaternary structure, may form heteromers. In terms of tissue distribution, expressed predominantly in roots. First detected in the root-shoot junction, and later in lateral roots and at the margin of matures leaves.

The protein localises to the membrane. In terms of biological role, glutamate-gated receptor that probably acts as a non-selective cation channel. Can transport sodium, potassium, and calcium ions. Functions as a carbon and nitrogen regulator and/or sensor that regulates carbon and nitrogen metabolism and distinct physiological process such as germination through the control of acid abscisic (ABA) biosynthesis. May be involved in light-signal transduction and calcium homeostasis via the regulation of calcium influx into cells. Seems required for the regulation of the abscisic acid (ABA) signaling pathway that modulates many aspects of plant physiology such as seed germination and response to drought (e.g. stomata opening). This is Glutamate receptor 1.1 (GLR1.1) from Arabidopsis thaliana (Mouse-ear cress).